The sequence spans 159 residues: MNISIPQIIAAILNFIILLLIVKHFWFDKITAVVDSRQSEIINKIEDTDKNQKLALELKEKNELELSNAKNQGKTIVEEYKSKAENVYEDIVKEAHEEADRIIKKSRLEAERQKKNAEEEIRAEAVELAVLVSSKTLEKTIDDLEHRRLIKDFISKVGI.

Residues 2-22 form a helical membrane-spanning segment; that stretch reads NISIPQIIAAILNFIILLLIV.

The protein belongs to the ATPase B chain family. F-type ATPases have 2 components, F(1) - the catalytic core - and F(0) - the membrane proton channel. F(1) has five subunits: alpha(3), beta(3), gamma(1), delta(1), epsilon(1). F(0) has three main subunits: a(1), b(2) and c(10-14). The alpha and beta chains form an alternating ring which encloses part of the gamma chain. F(1) is attached to F(0) by a central stalk formed by the gamma and epsilon chains, while a peripheral stalk is formed by the delta and b chains.

Its subcellular location is the cell membrane. Functionally, f(1)F(0) ATP synthase produces ATP from ADP in the presence of a proton or sodium gradient. F-type ATPases consist of two structural domains, F(1) containing the extramembraneous catalytic core and F(0) containing the membrane proton channel, linked together by a central stalk and a peripheral stalk. During catalysis, ATP synthesis in the catalytic domain of F(1) is coupled via a rotary mechanism of the central stalk subunits to proton translocation. Component of the F(0) channel, it forms part of the peripheral stalk, linking F(1) to F(0). In Clostridium botulinum (strain Okra / Type B1), this protein is ATP synthase subunit b.